A 491-amino-acid polypeptide reads, in one-letter code: Chromosomal replication initiator protein DnaA (491 aa).

The tract at residues 1 to 69 (MTTWDKCLKK…TIQECHGNDL (69 aa)) is domain I, interacts with DnaA modulators. The interval 69–154 (LIIEYSNKKF…KEDEEYSFGL (86 aa)) is domain II. The tract at residues 155 to 371 (PLKEKYVFDS…GALNRVLTTS (217 aa)) is domain III, AAA+ region. 4 residues coordinate ATP: glycine 199, glycine 201, lysine 202, and threonine 203. Residues 372–491 (KFNHKDPTIE…YELLLNKISR (120 aa)) form a domain IV, binds dsDNA region.

This sequence belongs to the DnaA family. In terms of assembly, oligomerizes as a right-handed, spiral filament on DNA at oriC.

It is found in the cytoplasm. Plays an essential role in the initiation and regulation of chromosomal replication. ATP-DnaA binds to the origin of replication (oriC) to initiate formation of the DNA replication initiation complex once per cell cycle. Binds the DnaA box (a 9 base pair repeat at the origin) and separates the double-stranded (ds)DNA. Forms a right-handed helical filament on oriC DNA; dsDNA binds to the exterior of the filament while single-stranded (ss)DNA is stabiized in the filament's interior. The ATP-DnaA-oriC complex binds and stabilizes one strand of the AT-rich DNA unwinding element (DUE), permitting loading of DNA polymerase. After initiation quickly degrades to an ADP-DnaA complex that is not apt for DNA replication. Binds acidic phospholipids. The sequence is that of Chromosomal replication initiator protein DnaA from Francisella tularensis subsp. tularensis (strain WY96-3418).